Consider the following 567-residue polypeptide: Thiol:disulfide interchange protein DsbD (567 aa).

Residues 1–19 (MAQRIFTLILLLCSTSAFA) form the signal peptide. Cystine bridges form between Cys122–Cys128 and Cys185–Cys307. Helical transmembrane passes span 170–192 (ALWALLIGIGIAFTPCVLPMYPL), 212–234 (LAFIYVQGMALTYTALGLVVAAA), 246–268 (YVLIGLAIVFTLLALSMFGLFTL), 297–319 (GAIAGLICSPCTTAPLSAILLYI), 326–348 (WLGGGTLYLYALGMGLPLMLVTV), 358–380 (GPWMAHVKTAFGFVILALPVFLL), and 387–409 (AWGLRLWSLLGVAFFGWAFITSL). A Thioredoxin domain is found at 435-567 (QDWAFGSPSA…FSAHLHDRQP (133 aa)). Cys482 and Cys485 are disulfide-bonded.

It belongs to the thioredoxin family. DsbD subfamily.

The protein resides in the cell inner membrane. The catalysed reaction is [protein]-dithiol + NAD(+) = [protein]-disulfide + NADH + H(+). The enzyme catalyses [protein]-dithiol + NADP(+) = [protein]-disulfide + NADPH + H(+). Its function is as follows. Required to facilitate the formation of correct disulfide bonds in some periplasmic proteins and for the assembly of the periplasmic c-type cytochromes. Acts by transferring electrons from cytoplasmic thioredoxin to the periplasm. This transfer involves a cascade of disulfide bond formation and reduction steps. In Salmonella typhi, this protein is Thiol:disulfide interchange protein DsbD.